Reading from the N-terminus, the 212-residue chain is Prolactin (212 aa).

Residues 1-26 (MARCCKCPRLHLAVTVLACVLVFTEG) form the signal peptide. Intrachain disulfides connect cysteine 71–cysteine 185 and cysteine 202–cysteine 212.

This sequence belongs to the somatotropin/prolactin family. As to expression, pituitary gland.

Its subcellular location is the secreted. In Ictalurus punctatus (Channel catfish), this protein is Prolactin (prl).